The following is an 84-amino-acid chain: MDVGNQILEPKNLKRNSGKLRNILKRISGNGIIKERKRRLGKNAPLENSKLVQQVKRNVNVGYATKKDTMRMSAQKRTTKRLKP.

A disordered region spans residues 62-84 (GYATKKDTMRMSAQKRTTKRLKP).

This is an uncharacterized protein from Soybean chlorotic mottle virus.